The primary structure comprises 308 residues: Ribonuclease HIII (308 aa).

In terms of domain architecture, RNase H type-2 spans 88–304; it reads FHCIGSDEAG…RDKAIHLMNQ (217 aa). 3 residues coordinate a divalent metal cation: Asp94, Glu95, and Asp199.

This sequence belongs to the RNase HII family. RnhC subfamily. Mn(2+) is required as a cofactor. Requires Mg(2+) as cofactor.

It localises to the cytoplasm. The enzyme catalyses Endonucleolytic cleavage to 5'-phosphomonoester.. Functionally, endonuclease that specifically degrades the RNA of RNA-DNA hybrids. This Staphylococcus epidermidis (strain ATCC 12228 / FDA PCI 1200) protein is Ribonuclease HIII.